The primary structure comprises 217 residues: Large ribosomal subunit protein uL4c (217 aa).

Residues 51–85 are disordered; that stretch reads HRNRNAHTQTRGEVSGGGRKPWKQKGTGRARAGSN.

The protein belongs to the universal ribosomal protein uL4 family. Part of the 50S ribosomal subunit.

It localises to the plastid. The protein localises to the chloroplast. Its function is as follows. Probably binds the 23S rRNA. The polypeptide is Large ribosomal subunit protein uL4c (rpl4) (Gracilaria tenuistipitata var. liui (Red alga)).